We begin with the raw amino-acid sequence, 351 residues long: MQVEVKLKENAYKVYIDELEELEFDSKVFILSNPKISGLHLKTLLSKIKAREIFIAAVKDGEEYKNLSTMEEILNQMFNSKLDRKSVLISFGGGVISDMGGFAASIYQRGIDFINIPTTLLACVDAAVGGKTGVNNNFGKNLIGTFYQPKAVYCESSFLKTLSSRELAAGMAEFIKMAAMFDDSILDFIEKIDEKSFLNATCENEIFTQIIARSIELKSRVVEQDEKESGLRMLLNYGHTFAHVIENFTDYKLYLHGEAVAIGMVMANQLALNLGFLDKMQSQKIKDILLKFGLPISYKINNVDEFYEAFFMDKKSSNKKINFVLAGPLGKGLIKGDISKEDIIATLREFQ.

Residues 60-65, 94-98, 118-119, Lys131, Lys140, and 158-161 each bind NAD(+); these read DGEEYK, GVISD, TT, and FLKT. Residues Glu173, His239, and His256 each coordinate Zn(2+).

The protein belongs to the sugar phosphate cyclases superfamily. Dehydroquinate synthase family. The cofactor is Co(2+). It depends on Zn(2+) as a cofactor. NAD(+) serves as cofactor.

The protein localises to the cytoplasm. The enzyme catalyses 7-phospho-2-dehydro-3-deoxy-D-arabino-heptonate = 3-dehydroquinate + phosphate. The protein operates within metabolic intermediate biosynthesis; chorismate biosynthesis; chorismate from D-erythrose 4-phosphate and phosphoenolpyruvate: step 2/7. Functionally, catalyzes the conversion of 3-deoxy-D-arabino-heptulosonate 7-phosphate (DAHP) to dehydroquinate (DHQ). This chain is 3-dehydroquinate synthase, found in Campylobacter jejuni subsp. jejuni serotype O:6 (strain 81116 / NCTC 11828).